A 446-amino-acid chain; its full sequence is uncharacterized protein (446 aa).

2 positions are modified to phosphoserine: serine 393 and serine 397. The disordered stretch occupies residues 411 to 431; the sequence is LSSTERRDLDRVRDKQKKQDQ.

Belongs to the IFRD family.

It is found in the cytoplasm. This is an uncharacterized protein from Schizosaccharomyces pombe (strain 972 / ATCC 24843) (Fission yeast).